The chain runs to 241 residues: MORN repeat-containing protein 3 (241 aa).

Positions 6-35 (CPRKVEPPWKGWDRKAQKNGLRHQVFAVNG) are interaction with MDM2. 7 MORN repeats span residues 38–60 (YVGEWKGNLKHGKGTQVWKKSGA), 62–84 (YEGDWKFGKRDGYGSLSHPDPET), 91–113 (YSGWWKGDKKSGYGIQFFGPKEY), 114–136 (YEGEWCNNQRSGWGRMYYNNGDI), 137–159 (YEGQWQNDKPEGEGMLRLKNGNR), 160–182 (YEGIWERGMKNGHGRFFHLDHGQ), and 184–205 (FEGYWVDNVAKCGTMIDFGRDE). An interaction with SIRT1 region spans residues 76-100 (SLSHPDPETGKLRRVYSGWWKGDKK). An interaction with TP53 region spans residues 206–240 (APEPTQFPIPKVEILDPDGVLKEALDKLMKPEEEE).

Interacts with MEIG1. Interacts with TP53, MDM2 and SIRT1; the interactions mediate post-transcriptional modifications of TP53 by MDM2 and SIRT1. Expressed in testis (at protein level).

It is found in the cytoplasmic vesicle. The protein resides in the secretory vesicle. Its subcellular location is the acrosome. Assembles a suppression complex (suppresome) by tethering SIRT1 and MDM2 to regulate composite modifications of p53/TP53. Confers both deacetylation-mediated functional inactivation, by SIRT1, and ubiquitination-dependent degradation, by MDM2, of p53/TP53, promoting a proliferative and cell survival behaviors. May play a role in the regulation of spermatogenesis. The polypeptide is MORN repeat-containing protein 3 (Morn3) (Mus musculus (Mouse)).